Here is a 126-residue protein sequence, read N- to C-terminus: uncharacterized protein (126 aa).

The chain crosses the membrane as a helical span at residues 48–68 (ILCMFPWQCVVYVFSNFVWLV).

It is found in the membrane. This is an uncharacterized protein from Homo sapiens (Human).